An 89-amino-acid polypeptide reads, in one-letter code: Small ribosomal subunit protein uS14B (89 aa).

Residues K38 to Y61 form a disordered region. Residues L39–P58 show a composition bias toward basic and acidic residues.

Belongs to the universal ribosomal protein uS14 family. In terms of assembly, part of the 30S ribosomal subunit. Contacts proteins S3 and S10.

Its function is as follows. Binds 16S rRNA, required for the assembly of 30S particles and may also be responsible for determining the conformation of the 16S rRNA at the A site. In Enterococcus faecalis (strain ATCC 700802 / V583), this protein is Small ribosomal subunit protein uS14B.